Consider the following 241-residue polypeptide: Xyloglucan-specific endo-beta-1,4-glucanase A (241 aa).

The N-terminal stretch at 1-16 is a signal peptide; that stretch reads MKVLALSALLSLASAA. Asparagine 47 carries N-linked (GlcNAc...) asparagine glycosylation.

It belongs to the glycosyl hydrolase 12 (cellulase H) family.

It is found in the secreted. It catalyses the reaction xyloglucan + H2O = xyloglucan oligosaccharides.. In terms of biological role, catalyzes endohydrolysis of 1,4-beta-D-glucosidic linkages in xyloglucan with retention of the beta-configuration of the glycosyl residues. Specific for xyloglucan and does not hydrolyze other cell wall components. This Aspergillus niger protein is Xyloglucan-specific endo-beta-1,4-glucanase A (xgeA).